The primary structure comprises 242 residues: Probable transcriptional regulatory protein Bmul_0984/BMULJ_02280 (242 aa).

Belongs to the TACO1 family.

It is found in the cytoplasm. This is Probable transcriptional regulatory protein Bmul_0984/BMULJ_02280 from Burkholderia multivorans (strain ATCC 17616 / 249).